A 44-amino-acid polypeptide reads, in one-letter code: Photosystem II reaction center protein K (44 aa).

Positions 1–7 (MESLLLA) are excised as a propeptide. The chain crosses the membrane as a helical span at residues 23 to 43 (LPIIPVFFLLLAFVWQAAIGF).

Belongs to the PsbK family. As to quaternary structure, PSII is composed of 1 copy each of membrane proteins PsbA, PsbB, PsbC, PsbD, PsbE, PsbF, PsbH, PsbI, PsbJ, PsbK, PsbL, PsbM, PsbT, PsbX, PsbY, PsbZ, Psb30/Ycf12, at least 3 peripheral proteins of the oxygen-evolving complex and a large number of cofactors. It forms dimeric complexes.

The protein resides in the plastid. The protein localises to the chloroplast thylakoid membrane. Its function is as follows. One of the components of the core complex of photosystem II (PSII). PSII is a light-driven water:plastoquinone oxidoreductase that uses light energy to abstract electrons from H(2)O, generating O(2) and a proton gradient subsequently used for ATP formation. It consists of a core antenna complex that captures photons, and an electron transfer chain that converts photonic excitation into a charge separation. The sequence is that of Photosystem II reaction center protein K from Trieres chinensis (Marine centric diatom).